The primary structure comprises 873 residues: MKKELEAKYSYEIVEENRYEWWIQNEYFKANPDSKKPKFSIVLPPPNVTGKLHIGHAWDGSLQDAIIRFKKLNGFDVLYLPGMDHAGISTQVKVEAKLREQGISRFELGREKFLEQAWKWKHEYAAIIRQQWSKLGLAFDYSMEKFTLDDDINKIVTEIFVDFYNKGLIYKGKRIVNWDPMQKTAISNVEVIYKEVEGFMYHFKYMIQGTNEFLNVATTRPETMFADQCLVVNPKDERYTSFIGKKAINPVNNQAIPIIADDYVELDFGTGVMKCTPAHDLNDFEIAVRHNLEKPICMNEDGTINEMGGEEYQGLDRFEARNKIIENLTKEKTFIKAEPMIHQVGFSERSNAIVEPYLSDQWFVKMDSFADMILKLQESNDKIKFFPERFDQVLKKWMENIHDWTISRQLWWGHRIPAWYNKEDKTKIYVGMEAPKDAENWIQDEDVLDTWFSSGLWPFATLMRGEGFESKYFKEYLPNGVLVTGHDIIFSWVSRMIFQTIEYTGQIPFKDVLIHGLVRDEHGAKMSKSLGNGIDPMDVIVNNGSDSLRFSLLTNSTPGQDIRYSDSKVKAAWNFINKLWNASRYVLMNLEEDFKPWEEQAILNSNSLNETDKWVLTEFSKVSKQVNYLIDKYEFAIAGKMLYDFVWNTYCSWYIEFAKVNLNNPKTKEATQQTIVYLLKNILIMLHPYLPFVTEHIYKTLDMKNSILEESWFDKEFVFETDYINVVIELINSIREFRATNNIKNNVLLNWNATNGNLEIITKYNLEINNFLNEFVNANLSINESLVSETTSLSVLDFFIEIPNDDFIDKEKMLEELATKKKELENEISRSERMLSNENFISKAAPSKIEEEKEKYELYKQQLELIQDKLNKM.

Positions 46–56 match the 'HIGH' region motif; that stretch reads PNVTGKLHIGH. Residues 525–529 carry the 'KMSKS' region motif; it reads KMSKS. Residue Lys-528 participates in ATP binding. Positions 804–873 form a coiled coil; the sequence is NDDFIDKEKM…ELIQDKLNKM (70 aa).

This sequence belongs to the class-I aminoacyl-tRNA synthetase family. ValS type 1 subfamily. In terms of assembly, monomer.

It localises to the cytoplasm. The catalysed reaction is tRNA(Val) + L-valine + ATP = L-valyl-tRNA(Val) + AMP + diphosphate. Catalyzes the attachment of valine to tRNA(Val). As ValRS can inadvertently accommodate and process structurally similar amino acids such as threonine, to avoid such errors, it has a 'posttransfer' editing activity that hydrolyzes mischarged Thr-tRNA(Val) in a tRNA-dependent manner. The sequence is that of Valine--tRNA ligase from Mesoplasma florum (strain ATCC 33453 / NBRC 100688 / NCTC 11704 / L1) (Acholeplasma florum).